The primary structure comprises 294 residues: Cyclin-G1 (294 aa).

The protein belongs to the cyclin family. Cyclin G subfamily. As to quaternary structure, binds to B' regulatory B subunits of protein phosphatase A (PP2A) following induction by p53 (in vitro). Highest levels in kidney, heart and skeletal muscle.

The protein localises to the nucleus. May play a role in growth regulation. Is associated with G2/M phase arrest in response to DNA damage. May be an intermediate by which p53 mediates its role as an inhibitor of cellular proliferation. This chain is Cyclin-G1 (Ccng1), found in Mus musculus (Mouse).